A 332-amino-acid polypeptide reads, in one-letter code: Glyoxylate reductase (332 aa).

Residues 155-158 (MGRI) and 236-238 (TSR) contribute to the NADP(+) site. Residues Arg238 and Glu267 contribute to the active site. The Proton donor role is filled by His286. 286-288 (HAA) lines the NADP(+) pocket.

Belongs to the D-isomer specific 2-hydroxyacid dehydrogenase family. GyaR subfamily. In terms of assembly, homodimer.

The protein resides in the cytoplasm. It carries out the reaction glycolate + NAD(+) = glyoxylate + NADH + H(+). In Korarchaeum cryptofilum (strain OPF8), this protein is Glyoxylate reductase.